Consider the following 494-residue polypeptide: Catalase (494 aa).

Catalysis depends on residues His65 and Asn138. Tyr348 contacts heme.

Belongs to the catalase family. Homotetramer. Heme is required as a cofactor.

Its subcellular location is the cytoplasm. The protein localises to the cytosol. It is found in the peroxisome matrix. The catalysed reaction is 2 H2O2 = O2 + 2 H2O. Its function is as follows. Catalyzes the degradation of hydrogen peroxide (H(2)O(2)) generated by peroxisomal oxidases to water and oxygen, thereby protecting cells from the toxic effects of hydrogen peroxide. This is Catalase from Pisum sativum (Garden pea).